A 200-amino-acid polypeptide reads, in one-letter code: ATP-dependent Clp protease proteolytic subunit (200 aa).

S101 acts as the Nucleophile in catalysis. Residue H126 is part of the active site.

This sequence belongs to the peptidase S14 family. In terms of assembly, component of the chloroplastic Clp protease core complex.

It is found in the plastid. Its subcellular location is the chloroplast stroma. The catalysed reaction is Hydrolysis of proteins to small peptides in the presence of ATP and magnesium. alpha-casein is the usual test substrate. In the absence of ATP, only oligopeptides shorter than five residues are hydrolyzed (such as succinyl-Leu-Tyr-|-NHMec, and Leu-Tyr-Leu-|-Tyr-Trp, in which cleavage of the -Tyr-|-Leu- and -Tyr-|-Trp bonds also occurs).. Functionally, cleaves peptides in various proteins in a process that requires ATP hydrolysis. Has a chymotrypsin-like activity. Plays a major role in the degradation of misfolded proteins. This chain is ATP-dependent Clp protease proteolytic subunit, found in Ostreococcus tauri.